The following is a 98-amino-acid chain: PqqA binding protein (98 aa).

The protein belongs to the PqqD family. As to quaternary structure, monomer. Interacts with PqqE.

It participates in cofactor biosynthesis; pyrroloquinoline quinone biosynthesis. Functions as a PqqA binding protein and presents PqqA to PqqE, in the pyrroloquinoline quinone (PQQ) biosynthetic pathway. The sequence is that of PqqA binding protein from Rhizobium meliloti (strain 1021) (Ensifer meliloti).